The chain runs to 813 residues: Cadherin-22 (813 aa).

An N-terminal signal peptide occupies residues Met1–Ala33. Over Ala34–Pro621 the chain is Extracellular. Cadherin domains are found at residues Trp61–Phe165, Leu166–Phe274, Pro275–Phe391, Arg392–Glu495, and Leu496–Phe613. N-linked (GlcNAc...) asparagine glycosylation is present at Asn159. 2 N-linked (GlcNAc...) asparagine glycosylation sites follow: Asn463 and Asn609. A helical transmembrane segment spans residues Gly622 to Leu642. Over Thr643–Ser813 the chain is Cytoplasmic. A disordered region spans residues Gly696–Glu726.

Strongly expressed in the pituitary gland and the brain (in the inner granular and glomerular layers of the olfactory bulb, anterior olfactory nucleus, primary olfactory cortex, Purkinje cell layer of cerebellum, and pineal gland). Low expression in lung and heart. No expression in submandibular gland, thymus, liver, spleen, adrenal, and kidney.

The protein localises to the cell membrane. Its function is as follows. Cadherins are calcium-dependent cell adhesion proteins. They preferentially interact with themselves in a homophilic manner in connecting cells; cadherins may thus contribute to the sorting of heterogeneous cell types. PB-cadherins may have a role in the morphological organization of pituitary gland and brain tissues. This Rattus norvegicus (Rat) protein is Cadherin-22 (Cdh22).